The sequence spans 215 residues: 3-demethoxyubiquinol 3-hydroxylase (215 aa).

The Fe cation site is built by glutamate 64, glutamate 94, histidine 97, glutamate 146, glutamate 178, and histidine 181.

Belongs to the COQ7 family. The cofactor is Fe cation.

Its subcellular location is the cell membrane. It carries out the reaction a 5-methoxy-2-methyl-3-(all-trans-polyprenyl)benzene-1,4-diol + AH2 + O2 = a 3-demethylubiquinol + A + H2O. It participates in cofactor biosynthesis; ubiquinone biosynthesis. Its function is as follows. Catalyzes the hydroxylation of 2-nonaprenyl-3-methyl-6-methoxy-1,4-benzoquinol during ubiquinone biosynthesis. In Stutzerimonas stutzeri (strain A1501) (Pseudomonas stutzeri), this protein is 3-demethoxyubiquinol 3-hydroxylase.